A 320-amino-acid chain; its full sequence is Ferrochelatase (320 aa).

His-194 and Glu-275 together coordinate Fe cation.

The protein belongs to the ferrochelatase family. Monomer.

Its subcellular location is the cytoplasm. The catalysed reaction is heme b + 2 H(+) = protoporphyrin IX + Fe(2+). The protein operates within porphyrin-containing compound metabolism; protoheme biosynthesis; protoheme from protoporphyrin-IX: step 1/1. Its function is as follows. Catalyzes the ferrous insertion into protoporphyrin IX. This chain is Ferrochelatase, found in Shigella boydii serotype 4 (strain Sb227).